The primary structure comprises 260 residues: Small ribosomal subunit protein uS2 (260 aa).

The protein belongs to the universal ribosomal protein uS2 family.

In Gluconacetobacter diazotrophicus (strain ATCC 49037 / DSM 5601 / CCUG 37298 / CIP 103539 / LMG 7603 / PAl5), this protein is Small ribosomal subunit protein uS2.